Consider the following 172-residue polypeptide: CYLSEDHMLGARENLRLLARMNRLSPHPCLQDRKDFGLPQEMVEGSQLQKDQAISVLHEMLQQCFNLFHIEHSSAAWNTTLLEQLCTGLQQQLEDLDACLGPVMGEKDSDMGRMGPILTVKKYFQDIHVYLKEKEYSDCAWEIIRVEMMRALSSSTTLQKRLRKMGGDLNSL.

Disulfide bonds link Cys-1-Cys-99 and Cys-29-Cys-139. An N-linked (GlcNAc...) asparagine glycan is attached at Asn-78.

Belongs to the alpha/beta interferon family. IFN-alphaII subfamily. As to expression, constitutively and exclusively expressed in the mononuclear cells of the extraembryonic trophectoderm.

The protein resides in the secreted. Paracrine hormone primarily responsible for maternal recognition of pregnancy. Interacts with endometrial receptors, probably type I interferon receptors, and blocks estrogen receptor expression, preventing the estrogen-induced increase in oxytocin receptor expression in the endometrium. This results in the suppression of the pulsatile endometrial release of the luteolytic hormone prostaglandin F2-alpha, hindering the regression of the corpus luteum (luteolysis) and therefore a return to ovarian cyclicity. This, and a possible direct effect of IFN-tau on prostaglandin synthesis, leads in turn to continued ovarian progesterone secretion, which stimulates the secretion by the endometrium of the nutrients required for the growth of the conceptus. In summary, displays particularly high antiviral and antiproliferative potency concurrently with particular weak cytotoxicity, high antiluteolytic activity and immunomodulatory properties. In contrast with other IFNs, IFN-tau is not virally inducible. This is Interferon tau-3 (IFNT3) from Bos taurus (Bovine).